A 107-amino-acid polypeptide reads, in one-letter code: Ig kappa chain V-VI region XRPC 44 (107 aa).

Residues 1 to 23 (EIVLTQSPAITAASLGQKVTITC) form a framework-1 region. An intrachain disulfide couples Cys23 to Cys87. The tract at residues 24-33 (SASSSVSYMH) is complementarity-determining-1. The segment at 34–48 (WYQQKSGTSPKPWIY) is framework-2. A complementarity-determining-2 region spans residues 49-55 (EISKLAS). A framework-3 region spans residues 56–87 (GVPARFSGSGSGTSYSLTISSMEAEDAAIYYC). A complementarity-determining-3 region spans residues 88–96 (QQWNYPLWT). The tract at residues 97–106 (FGGGTKLEIK) is framework-4.

The chain is Ig kappa chain V-VI region XRPC 44 from Mus musculus (Mouse).